The following is a 258-amino-acid chain: 5'-nucleotidase SurE (258 aa).

A divalent metal cation is bound by residues Asp-16, Asp-17, Ser-47, and Asn-99.

Belongs to the SurE nucleotidase family. Requires a divalent metal cation as cofactor.

The protein resides in the cytoplasm. It carries out the reaction a ribonucleoside 5'-phosphate + H2O = a ribonucleoside + phosphate. Nucleotidase that shows phosphatase activity on nucleoside 5'-monophosphates. The protein is 5'-nucleotidase SurE of Coxiella burnetii (strain CbuK_Q154) (Coxiella burnetii (strain Q154)).